We begin with the raw amino-acid sequence, 199 residues long: Recombination protein RecR (199 aa).

The C4-type zinc-finger motif lies at 58–73; the sequence is CKTCGNIDTQSPCTVC. Positions 81–176 constitute a Toprim domain; sequence AMIVVVADVA…KVTRLAHGVP (96 aa).

This sequence belongs to the RecR family.

Functionally, may play a role in DNA repair. It seems to be involved in an RecBC-independent recombinational process of DNA repair. It may act with RecF and RecO. The protein is Recombination protein RecR of Bradyrhizobium sp. (strain ORS 278).